A 418-amino-acid chain; its full sequence is Transcription termination factor Rho (418 aa).

Residues 48-123 form the Rho RNA-BD domain; that stretch reads DIYGDGVLEI…LKVNDINFDR (76 aa). ATP contacts are provided by residues 169–174, 181–186, and arginine 212; these read GKGQRG and KAGKTM.

This sequence belongs to the Rho family. Homohexamer. The homohexamer assembles into an open ring structure.

In terms of biological role, facilitates transcription termination by a mechanism that involves Rho binding to the nascent RNA, activation of Rho's RNA-dependent ATPase activity, and release of the mRNA from the DNA template. The polypeptide is Transcription termination factor Rho (Allochromatium vinosum (strain ATCC 17899 / DSM 180 / NBRC 103801 / NCIMB 10441 / D) (Chromatium vinosum)).